Reading from the N-terminus, the 205-residue chain is Keratin-associated protein 4-6 (205 aa).

30 repeat units span residues 20–24 (CCRPS), 25–29 (CCQTT), 30–34 (CCRTT), 35–39 (CCRPS), 40–44 (CCVSS), 45–49 (CCRPQ), 50–54 (CCQSV), 55–59 (CCQPT), 60–64 (CCRPS), 65–68 (CCPS), 69–73 (CCQTT), 74–78 (CCRTT), 79–83 (CCRPS), 84–88 (CCVSS), 89–93 (CCRPQ), 94–98 (CCQSV), 99–103 (CCQPT), 104–108 (CCRPS), 114–118 (CCRPS), 119–123 (CCVSR), 124–128 (CCRSQ), 129–133 (CCQSV), 134–138 (CCQPT), 139–143 (CCRPS), 144–148 (CCISS), 149–153 (CCRPS), 154–158 (CCESS), 159–163 (CCRPC), 164–168 (CCRPC), and 169–173 (CCLRP). Positions 20 to 173 (CCRPSCCQTT…CCRPCCCLRP (154 aa)) are 30 X 5 AA repeats of C-C-[IRQVEL]-[SPTR]-[STVQRCP].

It belongs to the KRTAP type 4 family. Interacts with hair keratins. In terms of tissue distribution, expressed in the hair follicles.

Functionally, in the hair cortex, hair keratin intermediate filaments are embedded in an interfilamentous matrix, consisting of hair keratin-associated proteins (KRTAP), which are essential for the formation of a rigid and resistant hair shaft through their extensive disulfide bond cross-linking with abundant cysteine residues of hair keratins. The matrix proteins include the high-sulfur and high-glycine-tyrosine keratins. The protein is Keratin-associated protein 4-6 (KRTAP4-6) of Homo sapiens (Human).